Consider the following 1243-residue polypeptide: METRAAENTAIFMCKCCNLFSPNQSELLSHVSEKHMEEGVNVDEIIIPLRPLSTPEPPNSSKTGDEFLVMKRKRGRPKGSTKKSSTEEELAENIVSPTEDSPLAPEEGNSLPPSSLECSKCCRKFSNTRQLRKHICIIVLNLGEEEGEAGNESDLELEKKCKEDDREKASKRPRSQKTEKVQKISGKEARQLSGAKKPIISVVLTAHEAIPGATKIVPVEAGPPETGATNSETTSADLVPRRGYQEYAIQQTPYEQPMKSSRLGPTQLKIFTCEYCNKVFKFKHSLQAHLRIHTNEKPYKCPQCSYASAIKANLNVHLRKHTGEKFACDYCSFTCLSKGHLKVHIERVHKKIKQHCRFCKKKYSDVKNLIKHIRDAHDPQDKKVKEALDELCLMTREGKRQLLYDCHICERKFKNELDRDRHMLVHGDKWPFACELCGHGATKYQALELHVRKHPFVYVCAVCRKKFVSSIRLRTHIKEVHGAAQEALVFTSSINQSFCLLEPGGDIQQEALGDQLQLVEEEFALQGVNALKEEACPGDTQLEEGRKEPEAPGEMPAPAVHLASPQAESTALPPCELETTVVSSSDLHSQEVVSDDFLLKNDTSSAEAHAAPEKPPDMQHRSSVQTQGEVITLLLSKAQSAGSDQESHGAQSPLGEGQNMAVLSAGDPDPSRCLRSNPAEASDLLPPVAGGGDTITHQPDSCKAAPEHRSGITAFMKVLNSLQKKQMNTSLCERIRKVYGDLECEYCGKLFWYQVHFDMHVRTHTREHLYYCSQCHYSSITKNCLKRHVIQKHSNILLKCPTDGCDYSTPDKYKLQAHLKVHTALDKRSYSCPVCEKSFSEDRLIKSHIKTNHPEVSMSTISEVLGRRVQLKGLIGKRAMKCPYCDFYFMKNGSDLQRHIWAHEGVKPFKCSLCEYATRSKSNLKAHMNRHSTEKTHLCDMCGKKFKSKGTLKSHKLLHTADGKQFKCTVCDYTAAQKPQLLRHMEQHVSFKPFRCAHCHYSCNISGSLKRHYNRKHPNEEYANVGTGELAAEVLIQQGGLKCPVCSFVYGTKWEFNRHLKNKHGLKVVEIDGDPKWETATEAPEEPSTQYLHITEAEEDVQGTQAAVAALQDLRYTSESGDRLDPTAVNILQQIIELGAETHDATALASVVAMAPGTVTVVKQVTEEEPSSNHTVMIQETVQQASVELAEQHHLVVSSDDVEGIETVTVYTQGGEASEFIVYVQEAMQPVEEQAVEQPAQEL.

A C2H2-type 1 zinc finger spans residues 12 to 35 (FMCKCCNLFSPNQSELLSHVSEKH). Disordered regions lie at residues 51–116 (PLST…PSSL) and 147–189 (GEAG…GKEA). The span at 70 to 81 (MKRKRGRPKGST) shows a compositional bias: basic residues. The C2H2-type 2; degenerate zinc finger occupies 116–141 (LECSKCCRKFSNTRQLRKHICIIVLN). Positions 156–189 (ELEKKCKEDDREKASKRPRSQKTEKVQKISGKEA) are enriched in basic and acidic residues. 7 C2H2-type zinc fingers span residues 271–293 (FTCE…LRIH), 299–321 (YKCP…LRKH), 326–349 (FACD…ERVH), 354–377 (QHCR…RDAH), 404–426 (YDCH…MLVH), 432–454 (FACE…VRKH), and 458–481 (YVCA…KEVH). Residues C273, C276, H289, H293, C301, C304, H317, H321, C328, C331, H344, H349, C356, C359, H372, H377, C406, C409, H422, and H426 each coordinate Zn(2+). Zn(2+) contacts are provided by C460, C463, H476, and H481. 3 disordered regions span residues 534–570 (EACP…AEST), 603–625 (TSSA…SSVQ), and 638–705 (AQSA…CKAA). The span at 610-620 (AAPEKPPDMQH) shows a compositional bias: basic and acidic residues. Residues 638–650 (AQSAGSDQESHGA) show a composition bias toward polar residues. 10 consecutive C2H2-type zinc fingers follow at residues 742 to 764 (LECE…VRTH), 770 to 793 (YYCS…IQKH), 798 to 822 (LKCP…LKVH), 830 to 853 (YSCP…KTNH), 880 to 903 (MKCP…IWAH), 909 to 931 (FKCS…MNRH), 937 to 959 (HLCD…KLLH), 966 to 988 (FKCT…MEQH), 994 to 1017 (FRCA…NRKH), and 1041 to 1064 (LKCP…KNKH). C772, C775, H788, H793, C800, C805, H818, H822, C832, C835, H848, H853, C882, C885, H899, H903, C911, C914, H927, H931, C939, C942, H955, and L958 together coordinate Zn(2+).

In terms of tissue distribution, isoform 1 is strongly expressed in placenta, spleen, kidney, testis and peripheral blood leukocytes. Expressed in CD4+ and CD8+ T-cells, CD19+ B-cells and CB14+ monocytes. Isoform 3 is strongly expressed in placenta, ovary, tonsil, CD19+ B-cells and CD14+ monocytes.

The protein resides in the nucleus. It is found in the cytoplasm. The protein localises to the cytosol. In terms of biological role, may be involved in transcriptional regulation. Overexpression causes down-regulation of a number of genes involved in the immune response. Some genes are also up-regulated. The polypeptide is Zinc finger protein ZFAT (ZFAT) (Homo sapiens (Human)).